The primary structure comprises 119 residues: UPF0102 protein Athe_0977 (119 aa).

This sequence belongs to the UPF0102 family.

This chain is UPF0102 protein Athe_0977, found in Caldicellulosiruptor bescii (strain ATCC BAA-1888 / DSM 6725 / KCTC 15123 / Z-1320) (Anaerocellum thermophilum).